Consider the following 85-residue polypeptide: UPF0335 protein BARBAKC583_0130 (85 aa).

The protein belongs to the UPF0335 family.

The sequence is that of UPF0335 protein BARBAKC583_0130 from Bartonella bacilliformis (strain ATCC 35685 / KC583 / Herrer 020/F12,63).